We begin with the raw amino-acid sequence, 445 residues long: Crotonyl-CoA reductase (445 aa).

Residue glutamate 149 participates in Zn(2+) binding.

This sequence belongs to the zinc-containing alcohol dehydrogenase family. Crotonyl-CoA carboxylase/reductase subfamily. In terms of assembly, homodimer. Zn(2+) is required as a cofactor.

It catalyses the reaction butanoyl-CoA + NADP(+) = (2E)-butenoyl-CoA + NADPH + H(+). Its activity is regulated as follows. Inhibited by NADPH at concentrations above 200 uM, by MgCl (30%), by ZnCl(2) (55%), and by CoCl, MnCl and CaCl (100%). Also inhibited by iodoacetamide, N-ethylmaleamide, the thiol group inhibitor beta-chloromercuribenzoate, palmitoyl-CoA and myristoyl-CoA. Catalyzes the conversion of crotonyl-CoA to butyryl-CoA. It uses only NADP as electron donor. May have a role in providing butyryl-CoA as a starter unit for straight-chain fatty acid biosynthesis. This Streptomyces avermitilis (strain ATCC 31267 / DSM 46492 / JCM 5070 / NBRC 14893 / NCIMB 12804 / NRRL 8165 / MA-4680) protein is Crotonyl-CoA reductase (ccrA2).